A 677-amino-acid polypeptide reads, in one-letter code: Galactocerebrosidase (677 aa).

The signal sequence occupies residues 1–33 (MGTVPAGSRRAPGCGEGMFILCLALLLAPGAPA). Residues Thr-101, Trp-143, and Asn-189 each contribute to the substrate site. The Proton donor/acceptor role is filled by Glu-190. Glu-265 serves as the catalytic Nucleophile. A disulfide bond links Cys-278 and Cys-385. N-linked (GlcNAc...) asparagine glycans are attached at residues Asn-291, Asn-370, and Asn-381. Arg-387 contributes to the substrate binding site. Residues Asn-394, Asn-399, Asn-424, Asn-441, Asn-509, Asn-549, and Asn-630 are each glycosylated (N-linked (GlcNAc...) asparagine).

The protein belongs to the glycosyl hydrolase 59 family.

The protein resides in the lysosome. The catalysed reaction is a beta-D-galactosyl-(1&lt;-&gt;1')-N-acylsphing-4-enine + H2O = an N-acylsphing-4-enine + D-galactose. It catalyses the reaction beta-D-galactosyl-(1&lt;-&gt;1)-sphing-4-enine + H2O = sphing-4-enine + D-galactose. The enzyme catalyses a D-galactosylceramide + H2O = an N-acyl-sphingoid base + D-galactose. Its function is as follows. Hydrolyzes the galactose ester bonds of glycolipids such as galactosylceramide and galactosylsphingosine. This is Galactocerebrosidase from Xenopus laevis (African clawed frog).